A 425-amino-acid polypeptide reads, in one-letter code: Bifunctional phosphoribosylaminoimidazole carboxylase/phosphoribosylaminoimidazole succinocarboxamide synthetase (425 aa).

Alanine 2 carries the N-acetylalanine modification. Residues 2–260 form an SAICAR synthetase domain region; the sequence is ATAEVLNIGK…WVAERVELLL (259 aa). Residue tyrosine 22 is modified to Phosphotyrosine. Serine 27 carries the phosphoserine modification. Lysine 36 bears the N6-acetyllysine mark. Serine 107 carries the post-translational modification Phosphoserine. Threonine 238 carries the phosphothreonine modification. The residue at position 247 (lysine 247) is an N6-acetyllysine. Residues 261–266 form a linker region; it reads KSESQC. Positions 267–425 are AIR carboxylase domain; that stretch reads RVVVLMGSTS…ADKKIRECNL (159 aa). Serine 274 carries the phosphoserine modification. Position 332 (serine 332) interacts with CO2.

It in the N-terminal section; belongs to the SAICAR synthetase family. The protein in the C-terminal section; belongs to the AIR carboxylase family. Class II subfamily. Homooctamer.

It catalyses the reaction 5-amino-1-(5-phospho-D-ribosyl)imidazole-4-carboxylate + L-aspartate + ATP = (2S)-2-[5-amino-1-(5-phospho-beta-D-ribosyl)imidazole-4-carboxamido]succinate + ADP + phosphate + 2 H(+). It carries out the reaction 5-amino-1-(5-phospho-D-ribosyl)imidazole-4-carboxylate + H(+) = 5-amino-1-(5-phospho-beta-D-ribosyl)imidazole + CO2. Its pathway is purine metabolism; IMP biosynthesis via de novo pathway; 5-amino-1-(5-phospho-D-ribosyl)imidazole-4-carboxamide from 5-amino-1-(5-phospho-D-ribosyl)imidazole-4-carboxylate: step 1/2. The protein operates within purine metabolism; IMP biosynthesis via de novo pathway; 5-amino-1-(5-phospho-D-ribosyl)imidazole-4-carboxylate from 5-amino-1-(5-phospho-D-ribosyl)imidazole (carboxylase route): step 1/1. Functionally, bifunctional phosphoribosylaminoimidazole carboxylase and phosphoribosylaminoimidazole succinocarboxamide synthetase catalyzing two reactions of the de novo purine biosynthetic pathway. The polypeptide is Bifunctional phosphoribosylaminoimidazole carboxylase/phosphoribosylaminoimidazole succinocarboxamide synthetase (Homo sapiens (Human)).